A 156-amino-acid polypeptide reads, in one-letter code: ATP synthase subunit b (156 aa).

A helical transmembrane segment spans residues 11-31 (LIAFALFVWFCMKFVWPPIIN).

This sequence belongs to the ATPase B chain family. In terms of assembly, F-type ATPases have 2 components, F(1) - the catalytic core - and F(0) - the membrane proton channel. F(1) has five subunits: alpha(3), beta(3), gamma(1), delta(1), epsilon(1). F(0) has three main subunits: a(1), b(2) and c(10-14). The alpha and beta chains form an alternating ring which encloses part of the gamma chain. F(1) is attached to F(0) by a central stalk formed by the gamma and epsilon chains, while a peripheral stalk is formed by the delta and b chains.

It localises to the cell inner membrane. In terms of biological role, f(1)F(0) ATP synthase produces ATP from ADP in the presence of a proton or sodium gradient. F-type ATPases consist of two structural domains, F(1) containing the extramembraneous catalytic core and F(0) containing the membrane proton channel, linked together by a central stalk and a peripheral stalk. During catalysis, ATP synthesis in the catalytic domain of F(1) is coupled via a rotary mechanism of the central stalk subunits to proton translocation. Its function is as follows. Component of the F(0) channel, it forms part of the peripheral stalk, linking F(1) to F(0). The chain is ATP synthase subunit b from Haemophilus influenzae (strain 86-028NP).